The sequence spans 352 residues: Protein RecA (352 aa).

Residue 74–81 (GPESSGKT) coordinates ATP.

The protein belongs to the RecA family.

The protein localises to the cytoplasm. Functionally, can catalyze the hydrolysis of ATP in the presence of single-stranded DNA, the ATP-dependent uptake of single-stranded DNA by duplex DNA, and the ATP-dependent hybridization of homologous single-stranded DNAs. It interacts with LexA causing its activation and leading to its autocatalytic cleavage. The chain is Protein RecA from Ralstonia nicotianae (strain ATCC BAA-1114 / GMI1000) (Ralstonia solanacearum).